The following is a 160-amino-acid chain: Phosphopantetheine adenylyltransferase (160 aa).

Serine 8 contacts substrate. ATP is bound by residues 8 to 9 (SF) and histidine 16. Residues lysine 40, leucine 73, and lysine 87 each coordinate substrate. Residues 88-90 (GLR), glutamate 98, and 122-128 (YGYVSST) each bind ATP.

This sequence belongs to the bacterial CoaD family. In terms of assembly, homohexamer. It depends on Mg(2+) as a cofactor.

The protein localises to the cytoplasm. It catalyses the reaction (R)-4'-phosphopantetheine + ATP + H(+) = 3'-dephospho-CoA + diphosphate. It participates in cofactor biosynthesis; coenzyme A biosynthesis; CoA from (R)-pantothenate: step 4/5. Its function is as follows. Reversibly transfers an adenylyl group from ATP to 4'-phosphopantetheine, yielding dephospho-CoA (dPCoA) and pyrophosphate. This is Phosphopantetheine adenylyltransferase from Corynebacterium glutamicum (strain R).